Consider the following 103-residue polypeptide: MGLIRKSHKQTQALAIKKIIKKCSSFGKNNDDSGLPNDVPKGHFVVYVGERRNRYIVPISCLDHPTFQDLLQRSEEEFGFNHDMGIIIPCQEVDFLSFFSMIA.

The protein belongs to the ARG7 family.

In terms of biological role, effector of hormonal and environmental signals in plant growth. Involved in heliotropism. The protein is Auxin-responsive protein SAUR50 of Helianthus annuus (Common sunflower).